The chain runs to 232 residues: Phosphatidylserine decarboxylase proenzyme (232 aa).

Ser190 serves as the catalytic Schiff-base intermediate with substrate; via pyruvic acid. Ser190 carries the post-translational modification Pyruvic acid (Ser); by autocatalysis.

The protein belongs to the phosphatidylserine decarboxylase family. PSD-A subfamily. In terms of assembly, heterodimer of a large membrane-associated beta subunit and a small pyruvoyl-containing alpha subunit. It depends on pyruvate as a cofactor. Is synthesized initially as an inactive proenzyme. Formation of the active enzyme involves a self-maturation process in which the active site pyruvoyl group is generated from an internal serine residue via an autocatalytic post-translational modification. Two non-identical subunits are generated from the proenzyme in this reaction, and the pyruvate is formed at the N-terminus of the alpha chain, which is derived from the carboxyl end of the proenzyme. The post-translation cleavage follows an unusual pathway, termed non-hydrolytic serinolysis, in which the side chain hydroxyl group of the serine supplies its oxygen atom to form the C-terminus of the beta chain, while the remainder of the serine residue undergoes an oxidative deamination to produce ammonia and the pyruvoyl prosthetic group on the alpha chain.

The protein localises to the cell membrane. The enzyme catalyses a 1,2-diacyl-sn-glycero-3-phospho-L-serine + H(+) = a 1,2-diacyl-sn-glycero-3-phosphoethanolamine + CO2. It participates in phospholipid metabolism; phosphatidylethanolamine biosynthesis; phosphatidylethanolamine from CDP-diacylglycerol: step 2/2. Its function is as follows. Catalyzes the formation of phosphatidylethanolamine (PtdEtn) from phosphatidylserine (PtdSer). The chain is Phosphatidylserine decarboxylase proenzyme from Rhodopseudomonas palustris (strain ATCC BAA-98 / CGA009).